Reading from the N-terminus, the 830-residue chain is MTTRREFIKRSAAVTAACTAGISLSGEASNVITDSEYTRLKWSKAPCRFCGTGCSVNVAVKDNQVVATHGDIQSEVNRGLNCVKGYFLSKIMYGKDRLTQPLLRKKNGEYHKDGDFTPVTWDEAFDVMAKQFKKTLKEKGPTAVGMFGSGQWTVWEGYAAVKLYKAGFRSNNIDPNARHCMASAVAGFMRTFGIDEPMGCYDDIEHADAFVLWGSNMAEMHPILWTRVTDRRLSHPHVKVAVLSTFQHRCFDLADLPIIFTPQADLAILNYIARYIIEKDMVNWDFVNKHVRFKVGAADIGYGLRPEHQLELAAANASNPGGAKDSSFEEYKNFLQQYDAQFVSKLSGASKEKLDQLAELYANPKTRVTSFWTMGFNQHTRGVWCNNLVYNLHLLTGKISSPGNSPFSLTGQPSACGTAREVGTFAHRLPADMVVTNPKHPEFAEKTWKIPPGVIPDKPGYHAVLQNRKLRDGELNAYWVQVNNNVQAAPNMLEETLPGYRNPNNFIVVSEAYPTVTSQAADLILPAAMWVEKEGAYGNAERRTQFWRQLVSAPGEAKSDLWQIMEFSKRFTTDEVWPEEILSKSPEFKGKSLFDVLFANNSVNKYSIEEIDPNYKNHESEHFGFYVQKGLFEEYAIFGRGHGHDLAEFDRYHEARGLRWPVVDGKETLWRFREGSDPYVKKGAGYQFYGHSDGKAIIFALPYEPPAESPDQDYPYWLVTGRVLEHWHSGSMTQRVPELYLAVPDALVYMHPDDARKLGVRRGDEIKVVSRRGEMRSRVETRGRNKPPVGLVFVPWFDASQLINKCTLDATDPISKQTDFKKCAVKLIKV.

The segment at residues 1–30 is a signal peptide (tat-type signal); sequence MTTRREFIKRSAAVTAACTAGISLSGEASN. The 57-residue stretch at 40 to 96 folds into the 4Fe-4S Mo/W bis-MGD-type domain; sequence LKWSKAPCRFCGTGCSVNVAVKDNQVVATHGDIQSEVNRGLNCVKGYFLSKIMYGKD. Positions 47, 50, 54, and 82 each coordinate [4Fe-4S] cluster. Mo-bis(molybdopterin guanine dinucleotide) is bound by residues Lys-84, Gln-151, Asn-176, Cys-180, 213 to 220, 244 to 248, Met-374, Gln-378, Asn-484, 510 to 511, Lys-533, Asp-560, and 720 to 729; these read WGSNMAEM, STFQH, SE, and TGRVLEHWHS. Trp-796 contacts substrate. 2 residues coordinate Mo-bis(molybdopterin guanine dinucleotide): Asn-804 and Lys-821.

It belongs to the prokaryotic molybdopterin-containing oxidoreductase family. NasA/NapA/NarB subfamily. As to quaternary structure, component of the periplasmic nitrate reductase NapAB complex composed of NapA and NapB. The cofactor is [4Fe-4S] cluster. Requires Mo-bis(molybdopterin guanine dinucleotide) as cofactor. Predicted to be exported by the Tat system. The position of the signal peptide cleavage has not been experimentally proven.

It is found in the periplasm. It carries out the reaction 2 Fe(II)-[cytochrome] + nitrate + 2 H(+) = 2 Fe(III)-[cytochrome] + nitrite + H2O. Its function is as follows. Catalytic subunit of the periplasmic nitrate reductase complex NapAB. Receives electrons from NapB and catalyzes the reduction of nitrate to nitrite. This chain is Periplasmic nitrate reductase, found in Hahella chejuensis (strain KCTC 2396).